The following is a 484-amino-acid chain: D-aminoacylase (484 aa).

The protein belongs to the metallo-dependent hydrolases superfamily. N-acyl-D-amino-acid deacylase family. Zn(2+) is required as a cofactor.

It is found in the cytoplasm. It carries out the reaction an N-acyl-D-amino acid + H2O = a D-alpha-amino acid + a carboxylate. Functionally, has a wide specificity; hydrolyzes N-acyl derivative of neutral D-amino acids. The polypeptide is D-aminoacylase (dan) (Alcaligenes xylosoxydans xylosoxydans (Achromobacter xylosoxidans)).